The primary structure comprises 387 residues: Dual specificity mitogen-activated protein kinase kinase mek-2 (387 aa).

Residues 1–37 form a disordered region; the sequence is MSSGKRRNPLGLSLPPTVNEQSESGEATAEEATATVP. Residues 16–25 show a composition bias toward polar residues; that stretch reads PTVNEQSESG. The segment covering 26 to 35 has biased composition (low complexity); it reads EATAEEATAT. The region spanning 73–360 is the Protein kinase domain; the sequence is LQTEGELGHG…LKSLTADVFF (288 aa). Residues 79–87 and K102 each bind ATP; that span reads LGHGNGGVV. D195 (proton acceptor) is an active-site residue. Phosphoserine is present on residues S223 and S227.

The protein belongs to the protein kinase superfamily. STE Ser/Thr protein kinase family. MAP kinase kinase subfamily. As to quaternary structure, interacts with ksr-1.

The catalysed reaction is L-seryl-[protein] + ATP = O-phospho-L-seryl-[protein] + ADP + H(+). It catalyses the reaction L-threonyl-[protein] + ATP = O-phospho-L-threonyl-[protein] + ADP + H(+). It carries out the reaction L-tyrosyl-[protein] + ATP = O-phospho-L-tyrosyl-[protein] + ADP + H(+). Activated by tyrosine and threonine phosphorylation catalyzed by MAP kinase kinase kinases. Functions in the let-60 Ras signaling pathway; acts downstream of lin-45 raf kinase, but before the sur-1/mpk-1 gene product in controlling vulval cell differentiation. Required for progression of developing oocytes through the pachytene stage. Plays a role in responses to M.nematophilum-mediated bacterial infection by promoting tail swelling and preventing constipation. Involved in fluid homeostasis. Positively regulates lifespan upstream of mpk-1. This Caenorhabditis elegans protein is Dual specificity mitogen-activated protein kinase kinase mek-2 (mek-2).